Reading from the N-terminus, the 219-residue chain is Deoxyribose-phosphate aldolase 1 (219 aa).

Asp87 acts as the Proton donor/acceptor in catalysis. Lys149 functions as the Schiff-base intermediate with acetaldehyde in the catalytic mechanism. The active-site Proton donor/acceptor is Lys178.

This sequence belongs to the DeoC/FbaB aldolase family. DeoC type 1 subfamily.

It is found in the cytoplasm. The catalysed reaction is 2-deoxy-D-ribose 5-phosphate = D-glyceraldehyde 3-phosphate + acetaldehyde. It functions in the pathway carbohydrate degradation; 2-deoxy-D-ribose 1-phosphate degradation; D-glyceraldehyde 3-phosphate and acetaldehyde from 2-deoxy-alpha-D-ribose 1-phosphate: step 2/2. Its function is as follows. Catalyzes a reversible aldol reaction between acetaldehyde and D-glyceraldehyde 3-phosphate to generate 2-deoxy-D-ribose 5-phosphate. The chain is Deoxyribose-phosphate aldolase 1 from Vibrio vulnificus (strain YJ016).